The chain runs to 183 residues: Lipid droplet coating protein Cap20 (183 aa).

Belongs to the perilipin family.

Its subcellular location is the lipid droplet. Its function is as follows. Lipid droplet coating protein that regulates lipid metabolism, appressorial turgor pressure, and virulence. Appressorial turgor pressure is important for the mechanical penetration of the host cuticle during infection. The chain is Lipid droplet coating protein Cap20 (Cap20) from Colletotrichum gloeosporioides (Anthracnose fungus).